The sequence spans 258 residues: tRNA pseudouridine synthase A (258 aa).

Catalysis depends on Asp52, which acts as the Nucleophile. Tyr110 contributes to the substrate binding site.

Belongs to the tRNA pseudouridine synthase TruA family. Homodimer.

It carries out the reaction uridine(38/39/40) in tRNA = pseudouridine(38/39/40) in tRNA. Its function is as follows. Formation of pseudouridine at positions 38, 39 and 40 in the anticodon stem and loop of transfer RNAs. The chain is tRNA pseudouridine synthase A from Francisella tularensis subsp. tularensis (strain FSC 198).